The following is a 203-amino-acid chain: Endo-type membrane-bound lytic murein transglycosylase A (203 aa).

The N-terminal stretch at 1–15 (MKLRWLMWLVVFLAG) is a signal peptide. Cys-16 is lipidated: N-palmitoyl cysteine. A lipid anchor (S-diacylglycerol cysteine) is attached at Cys-16.

This sequence belongs to the transglycosylase Slt family.

Its subcellular location is the cell outer membrane. It catalyses the reaction Endolytic cleavage of the (1-&gt;4)-beta-glycosidic linkage between N-acetylmuramic acid (MurNAc) and N-acetylglucosamine (GlcNAc) residues in peptidoglycan with concomitant formation of a 1,6-anhydrobond in the MurNAc residue.. Functionally, murein-degrading enzyme. May play a role in recycling of muropeptides during cell elongation and/or cell division. Preferentially cleaves at a distance of more than two disaccharide units from the ends of the glycan chain. The protein is Endo-type membrane-bound lytic murein transglycosylase A of Cronobacter sakazakii (strain ATCC BAA-894) (Enterobacter sakazakii).